Here is a 173-residue protein sequence, read N- to C-terminus: RNA pyrophosphohydrolase (173 aa).

Positions 11–164 constitute a Nudix hydrolase domain; it reads PYRRSVGILV…KKHVYMKIVN (154 aa). A Nudix box motif is present at residues 52-73; sequence GGIDENEEPLDAARRELYEETG.

The protein belongs to the Nudix hydrolase family. RppH subfamily. A divalent metal cation serves as cofactor.

Accelerates the degradation of transcripts by removing pyrophosphate from the 5'-end of triphosphorylated RNA, leading to a more labile monophosphorylated state that can stimulate subsequent ribonuclease cleavage. This Bartonella henselae (strain ATCC 49882 / DSM 28221 / CCUG 30454 / Houston 1) (Rochalimaea henselae) protein is RNA pyrophosphohydrolase.